The chain runs to 695 residues: Elongation factor G (695 aa).

Positions 10 to 285 (DKTRNIGIMA…GVVDYLPSPL (276 aa)) constitute a tr-type G domain. Residues 19–26 (AHIDAGKT), 83–87 (DTPGH), and 137–140 (NKMD) contribute to the GTP site.

It belongs to the TRAFAC class translation factor GTPase superfamily. Classic translation factor GTPase family. EF-G/EF-2 subfamily.

The protein localises to the cytoplasm. In terms of biological role, catalyzes the GTP-dependent ribosomal translocation step during translation elongation. During this step, the ribosome changes from the pre-translocational (PRE) to the post-translocational (POST) state as the newly formed A-site-bound peptidyl-tRNA and P-site-bound deacylated tRNA move to the P and E sites, respectively. Catalyzes the coordinated movement of the two tRNA molecules, the mRNA and conformational changes in the ribosome. The chain is Elongation factor G from Latilactobacillus sakei subsp. sakei (strain 23K) (Lactobacillus sakei subsp. sakei).